We begin with the raw amino-acid sequence, 488 residues long: Germacrene A hydroxylase (488 aa).

A helical; Signal-anchor for type II membrane protein transmembrane segment spans residues 7–23; sequence TSIALATILFFVYKFAT. Residues Asn169, Asn260, Asn379, and Asn410 are each glycosylated (N-linked (GlcNAc...) asparagine). Cys432 contributes to the heme binding site.

It belongs to the cytochrome P450 family. As to expression, expressed in floral glandular trichomes.

The protein resides in the endoplasmic reticulum membrane. The catalysed reaction is (+)-(R)-germacrene A + 3 reduced [NADPH--hemoprotein reductase] + 3 O2 = germacra-1(10),4,11(13)-trien-12-oate + 3 oxidized [NADPH--hemoprotein reductase] + 4 H2O + 4 H(+). It functions in the pathway secondary metabolite biosynthesis; terpenoid biosynthesis. Its function is as follows. Involved in the biosynthesis of germacrene-derived sesquiterpene lactones. Component of the parthenolide biosynthetic pathway; parthenolide and conjugates are promising anti-cancer drugs highly active against colon cancer cells. Catalyzes three consecutive oxidations of germacrene A to produce germacrene A acid. This is Germacrene A hydroxylase from Tanacetum parthenium (Feverfew).